The following is a 127-amino-acid chain: Single-stranded DNA-binding protein 2 (127 aa).

The 100-residue stretch at 4–103 (INKVMLVGRC…ITINTIELLG (100 aa)) folds into the SSB domain. Positions 104–127 (SPRKEESTSTSAPNETQAVANANF) are disordered. Over residues 111–127 (TSTSAPNETQAVANANF) the composition is skewed to polar residues.

Homotetramer.

This Nostoc sp. (strain PCC 7120 / SAG 25.82 / UTEX 2576) protein is Single-stranded DNA-binding protein 2 (ssb2).